The following is a 226-amino-acid chain: MNRLFGRGKPKEPGPSLNDCIAGVDARATNIEEKISNLEAELRKYREQMSKMREGPAKNSVKQKALRVLKQKKAYEQQAESLRNQSFNMEQANYAAQSLKDTQATVAAMKDGVKQMKTEYKKINIDQIEDIQDDMADMFEQADEVQEALGRTYGMPEVDDDDLQAELDALGDEIALDDDTSYLDDVVKAPEAPSREPGADSIVPGKSTIETDEFGLPKIPTSLKTT.

A coiled-coil region spans residues 21–93 (IAGVDARATN…NQSFNMEQAN (73 aa)). Residues 188 to 198 (KAPEAPSREPG) show a composition bias toward basic and acidic residues. Residues 188–226 (KAPEAPSREPGADSIVPGKSTIETDEFGLPKIPTSLKTT) are disordered. S201 carries the post-translational modification Phosphoserine. Phosphothreonine is present on T226.

This sequence belongs to the SNF7 family. In terms of assembly, probable peripherally associated component of the endosomal sorting required for transport complex III (ESCRT-III).

Its subcellular location is the endosome membrane. Its function is as follows. Probable peripherally associated component of the endosomal sorting required for transport complex III (ESCRT-III) which is involved in multivesicular bodies (MVBs) formation and sorting of endosomal cargo proteins into MVBs. MVBs contain intraluminal vesicles (ILVs) that are generated by invagination and scission from the limiting membrane of the endosome and are delivered to lysosomes enabling degradation of membrane proteins. Specifically down-regulates Notch signaling activity in the germarium, probably by facilitating Notch endocytosis. The chain is Charged multivesicular body protein 5 from Drosophila melanogaster (Fruit fly).